Consider the following 194-residue polypeptide: Adenylate kinase isoenzyme 1 (194 aa).

Met-1 carries the N-acetylmethionine modification. 18–23 (GSGKGT) contacts ATP. Phosphoserine is present on Ser-38. The tract at residues 38–67 (STGDLLRAEVSSGSARGKKLSEIMEKGQLV) is NMP. AMP-binding positions include Thr-39, Arg-44, 65 to 67 (QLV), 94 to 97 (GYPR), and Gln-101. The LID stretch occupies residues 131–141 (KRGETSGRVDD). Arg-132 lines the ATP pocket. Residues Arg-138 and Arg-149 each coordinate AMP. Residue Gly-177 coordinates ATP.

The protein belongs to the adenylate kinase family. AK1 subfamily. In terms of assembly, monomer. Mg(2+) serves as cofactor.

The protein localises to the cytoplasm. It catalyses the reaction a ribonucleoside 5'-phosphate + ATP = a ribonucleoside 5'-diphosphate + ADP. The enzyme catalyses AMP + ATP = 2 ADP. The catalysed reaction is dAMP + ATP = dADP + ADP. It carries out the reaction dATP + AMP = dADP + ADP. It catalyses the reaction dAMP + dATP = 2 dADP. The enzyme catalyses a 2'-deoxyribonucleoside 5'-diphosphate + ATP = a 2'-deoxyribonucleoside 5'-triphosphate + ADP. The catalysed reaction is a ribonucleoside 5'-diphosphate + ATP = a ribonucleoside 5'-triphosphate + ADP. It carries out the reaction CDP + GTP = CTP + GDP. It catalyses the reaction GDP + ATP = GTP + ADP. The enzyme catalyses UDP + ATP = UTP + ADP. The catalysed reaction is GTP + UDP = UTP + GDP. It carries out the reaction dTDP + GTP = dTTP + GDP. It catalyses the reaction dCDP + GTP = dCTP + GDP. The enzyme catalyses dGDP + ATP = dGTP + ADP. The catalysed reaction is dADP + GTP = dATP + GDP. It carries out the reaction thiamine diphosphate + ADP = thiamine triphosphate + AMP. Catalyzes the reversible transfer of the terminal phosphate group between ATP and AMP. Also displays broad nucleoside diphosphate kinase activity. Plays an important role in cellular energy homeostasis and in adenine nucleotide metabolism. Also catalyzes at a very low rate the synthesis of thiamine triphosphate (ThTP) from thiamine diphosphate (ThDP) and ADP. The sequence is that of Adenylate kinase isoenzyme 1 from Oryctolagus cuniculus (Rabbit).